The primary structure comprises 577 residues: MNIQALLSEKVSQALIAAGAPADCEPQVRQSAKVQFGDYQANGVMAVAKKLGMPPRQLAELVLTHLDLNGIANKVEIAGPGFINIFLDPAFLASHVDAALKSERLGVAQPKAETIVVDYSAPNVAKEMHVGHLRSTIIGDAAVRTLEFLGHKVIRANHVGDWGTQFGMLIAFLEKQQQENAGEMALADLEGFYREAKKHYDEDAAFAERARSYVVKLQGGDEYFREMWRKLVDITMSQNQLAYNRLNVTLTRDDVMGESLYNPMLPGIVADLKAKKLAVESEGATVVFLDEYKNKEGEPMGVIIQKKDGGYLYTTTDIACAKYRYETLHADRVLYYIDSRQHQHLMQAWTIVRKAGYVPESVPLEHHMFGMMLGKDGKPFKTRAGGTVKLSDLLDEALERARRLVAEKNPDMPAEELEKLANAVGIGAVKYADLSKNRTTDYIFDWDNMLAFEGNTAPYMQYAYTRVLSVFRKANIDESALANAAVVITEDREAQLAARLLQFEETLTVVAREGTPHVMCSYLYDLAGLFSGFYEHCPILSADNEEARNSRLKLAQLTAKTLKLGLDTLGIETVERM.

Residues 122-132 (PNVAKEMHVGH) carry the 'HIGH' region motif.

Belongs to the class-I aminoacyl-tRNA synthetase family. Monomer.

It is found in the cytoplasm. It catalyses the reaction tRNA(Arg) + L-arginine + ATP = L-arginyl-tRNA(Arg) + AMP + diphosphate. This is Arginine--tRNA ligase from Enterobacter sp. (strain 638).